Here is a 226-residue protein sequence, read N- to C-terminus: RPA-interacting protein A (226 aa).

The interval 1 to 45 (MEAERRHRALYKGTTPPWKETYRKRCVERLKRNRSKLLDKFRQVG) is interaction with importin beta. The interaction with RPA1 stretch occupies residues 49 to 171 (HGGVGGSFLV…QCGVYINTQS (123 aa)). The RIP-type zinc-finger motif lies at 144-219 (CPVCNRNYLT…ASLFMSCQEC (76 aa)).

As to quaternary structure, interacts directly with the rpa1 subunit of RPA complex. Interacts with importin beta, but not with importin alpha. Forms a complex with the RPA complex and importin beta, which is dissociated by Ran-GTP.

The protein localises to the nucleus. Mediates the import of RPA complex into the nucleus, via its interaction with importin beta. The sequence is that of RPA-interacting protein A (rpain-a) from Xenopus laevis (African clawed frog).